Consider the following 118-residue polypeptide: DNA-binding protein Msp_0595 (118 aa).

A compositionally biased stretch (low complexity) spans 15-44 (LKQQQLAAQQQQGASLEQMQQEEQARQQFE). The segment at 15–45 (LKQQQLAAQQQQGASLEQMQQEEQARQQFEN) is disordered.

The protein belongs to the PDCD5 family.

The sequence is that of DNA-binding protein Msp_0595 from Methanosphaera stadtmanae (strain ATCC 43021 / DSM 3091 / JCM 11832 / MCB-3).